The primary structure comprises 279 residues: Sarcosine/dimethylglycine N-methyltransferase (279 aa).

The protein belongs to the methyltransferase superfamily. In terms of assembly, monomer.

The enzyme catalyses sarcosine + 2 S-adenosyl-L-methionine = glycine betaine + 2 S-adenosyl-L-homocysteine + 2 H(+). It carries out the reaction sarcosine + S-adenosyl-L-methionine = N,N-dimethylglycine + S-adenosyl-L-homocysteine + H(+). It catalyses the reaction N,N-dimethylglycine + S-adenosyl-L-methionine = glycine betaine + S-adenosyl-L-homocysteine + H(+). The protein operates within amine and polyamine biosynthesis; betaine biosynthesis via glycine pathway; betaine from glycine: step 2/3. It functions in the pathway amine and polyamine biosynthesis; betaine biosynthesis via glycine pathway; betaine from glycine: step 3/3. P-chloromercuribenzoate acid inhibits 23% of the SDMT activities on sarcosine and dimethylglycine, and S-adenosylhomocysteine (AdoHcy) inhibits completely GSMT activities. In terms of biological role, catalyzes the methylation of sarcosine and dimethylglycine to dimethylglycine and betaine, respectively, with S-adenosylmethionine (AdoMet) acting as the methyl donor. It has strict specificity for sarcosine and dimethylglycine as the methyl group acceptors. This is Sarcosine/dimethylglycine N-methyltransferase from Halorhodospira halochloris (Ectothiorhodospira halochloris).